We begin with the raw amino-acid sequence, 389 residues long: Allantoicase (389 aa).

This sequence belongs to the allantoicase family.

The enzyme catalyses allantoate + H2O = (S)-ureidoglycolate + urea. It participates in nitrogen metabolism; (S)-allantoin degradation; (S)-ureidoglycolate from allantoate (aminidohydrolase route): step 1/1. In terms of biological role, utilization of purines as secondary nitrogen sources, when primary sources are limiting. The polypeptide is Allantoicase (allc) (Xenopus tropicalis (Western clawed frog)).